A 163-amino-acid chain; its full sequence is EF-hand calcium-binding domain-containing protein 11 (163 aa).

EF-hand domains are found at residues Ser18–Tyr53, Arg91–Lys126, and Leu127–Glu162. Ca(2+)-binding residues include Asp140, Asp142, Asp144, His146, and Asp151.

The protein is EF-hand calcium-binding domain-containing protein 11 (EFCAB11) of Homo sapiens (Human).